The sequence spans 149 residues: Endoribonuclease YbeY (149 aa).

H115, H119, and H125 together coordinate Zn(2+).

This sequence belongs to the endoribonuclease YbeY family. Zn(2+) serves as cofactor.

It localises to the cytoplasm. Functionally, single strand-specific metallo-endoribonuclease involved in late-stage 70S ribosome quality control and in maturation of the 3' terminus of the 16S rRNA. The sequence is that of Endoribonuclease YbeY from Mycoplasmopsis pulmonis (strain UAB CTIP) (Mycoplasma pulmonis).